The following is a 583-amino-acid chain: Sensor protein SrrB (583 aa).

The Cytoplasmic segment spans residues 1-11 (MMSRLNSVVIK). The helical transmembrane segment at 12 to 32 (LWLTIILIVTTVLILLSIALI) threads the bilayer. Residues 33–174 (TFMQYYFTQE…SIEDTNNAIT (142 aa)) are Extracellular-facing. Residues 175–195 (IITIITAVIFLTITTVFAFFL) traverse the membrane as a helical segment. Residues 196–583 (SSRITKPLRR…TFIIKLPKPE (388 aa)) lie on the Cytoplasmic side of the membrane. Residues 197 to 249 (SRITKPLRRLRDQATRVSEGDYSYKPSVTTKDEIGQLSQAFNQMSTEIEEHVD) enclose the HAMP domain. A Histidine kinase domain is found at 366–583 (NVSHELRTPI…TFIIKLPKPE (218 aa)). Position 369 is a phosphohistidine; by autocatalysis (His369).

Its subcellular location is the cell membrane. The catalysed reaction is ATP + protein L-histidine = ADP + protein N-phospho-L-histidine.. Member of the two-component regulatory system SrrA/SrrB, which is involved in the global regulation of staphylococcal virulence factors in response to environmental oxygen levels as well as biofilm formation. Also plays an essential role in host-derived nitric oxide resistance by regulating hmp/flavohemoglobin, an enzyme that detoxifies nitric oxide by converting it to nitrate. Functions as a sensor protein kinase which is autophosphorylated at a histidine residue and transfers its phosphate group to SrrA. In turn, SrrA binds to the upstream promoter regions of the target genes to positively and negatively regulate their expression. The polypeptide is Sensor protein SrrB (srrB) (Staphylococcus aureus (strain MW2)).